We begin with the raw amino-acid sequence, 88 residues long: Small ribosomal subunit protein bS20 (88 aa).

The protein belongs to the bacterial ribosomal protein bS20 family.

Functionally, binds directly to 16S ribosomal RNA. In Clostridioides difficile (strain 630) (Peptoclostridium difficile), this protein is Small ribosomal subunit protein bS20.